Consider the following 450-residue polypeptide: Phosphopentomutase (450 aa).

Ser-93 acts as the Phosphoserine intermediate in catalysis. 4 residues coordinate Mg(2+): Ser-93, Asp-231, Asp-233, and Asp-235. Ser-93 is modified (phosphoserine; by autocatalysis).

This sequence belongs to the phosphohexose mutase family. Homotetramer. Mg(2+) is required as a cofactor. In terms of processing, activated by phosphorylation.

The catalysed reaction is alpha-D-ribose 1-phosphate = D-ribose 5-phosphate. The enzyme catalyses 2-deoxy-alpha-D-ribose 1-phosphate = 2-deoxy-D-ribose 5-phosphate. Functionally, catalyzes the conversion of deoxyribose 1-phosphate to deoxyribose 5-phosphate. Also shows weak activity with glucose 1-phosphate and mannose 1-phosphate. Could be involved in pentose biosynthesis. The protein is Phosphopentomutase of Thermococcus kodakarensis (strain ATCC BAA-918 / JCM 12380 / KOD1) (Pyrococcus kodakaraensis (strain KOD1)).